Consider the following 741-residue polypeptide: Catalase-peroxidase 2 (741 aa).

Residues 1-28 (MQKKRIGKSVVAALAIIAMSAGTVAAWA) form the signal peptide. Positions 107–228 (WHGAGTYRTY…LAATQMGLIY (122 aa)) form a cross-link, tryptophyl-tyrosyl-methioninium (Trp-Tyr) (with M-254). The active-site Proton acceptor is histidine 108. The tryptophyl-tyrosyl-methioninium (Tyr-Met) (with W-107) cross-link spans 228-254 (YVNPEGPNGNPDPVAAAKDIREAFGRM). Heme b is bound at residue histidine 269.

This sequence belongs to the peroxidase family. Peroxidase/catalase subfamily. Homodimer or homotetramer. The cofactor is heme b. Post-translationally, formation of the three residue Trp-Tyr-Met cross-link is important for the catalase, but not the peroxidase activity of the enzyme.

It catalyses the reaction H2O2 + AH2 = A + 2 H2O. The enzyme catalyses 2 H2O2 = O2 + 2 H2O. In terms of biological role, bifunctional enzyme with both catalase and broad-spectrum peroxidase activity. This is Catalase-peroxidase 2 from Burkholderia ambifaria (strain MC40-6).